We begin with the raw amino-acid sequence, 183 residues long: Large ribosomal subunit protein bL25 (183 aa).

Belongs to the bacterial ribosomal protein bL25 family. CTC subfamily. In terms of assembly, part of the 50S ribosomal subunit; part of the 5S rRNA/L5/L18/L25 subcomplex. Contacts the 5S rRNA. Binds to the 5S rRNA independently of L5 and L18.

Functionally, this is one of the proteins that binds to the 5S RNA in the ribosome where it forms part of the central protuberance. This is Large ribosomal subunit protein bL25 from Desulfotalea psychrophila (strain LSv54 / DSM 12343).